Here is a 417-residue protein sequence, read N- to C-terminus: Gamma-glutamyl phosphate reductase (417 aa).

This sequence belongs to the gamma-glutamyl phosphate reductase family.

It is found in the cytoplasm. It carries out the reaction L-glutamate 5-semialdehyde + phosphate + NADP(+) = L-glutamyl 5-phosphate + NADPH + H(+). Its pathway is amino-acid biosynthesis; L-proline biosynthesis; L-glutamate 5-semialdehyde from L-glutamate: step 2/2. Its function is as follows. Catalyzes the NADPH-dependent reduction of L-glutamate 5-phosphate into L-glutamate 5-semialdehyde and phosphate. The product spontaneously undergoes cyclization to form 1-pyrroline-5-carboxylate. This chain is Gamma-glutamyl phosphate reductase, found in Serratia marcescens.